The primary structure comprises 231 residues: Uracil-DNA glycosylase (231 aa).

D74 acts as the Proton acceptor in catalysis.

It belongs to the uracil-DNA glycosylase (UDG) superfamily. UNG family.

The protein resides in the cytoplasm. The enzyme catalyses Hydrolyzes single-stranded DNA or mismatched double-stranded DNA and polynucleotides, releasing free uracil.. Functionally, excises uracil residues from the DNA which can arise as a result of misincorporation of dUMP residues by DNA polymerase or due to deamination of cytosine. This is Uracil-DNA glycosylase from Campylobacter jejuni subsp. doylei (strain ATCC BAA-1458 / RM4099 / 269.97).